Consider the following 299-residue polypeptide: Acetylglutamate kinase (299 aa).

Residues 66-67, Arg-88, and Asn-196 contribute to the substrate site; that span reads GG.

It belongs to the acetylglutamate kinase family. ArgB subfamily.

It is found in the cytoplasm. The catalysed reaction is N-acetyl-L-glutamate + ATP = N-acetyl-L-glutamyl 5-phosphate + ADP. Its pathway is amino-acid biosynthesis; L-arginine biosynthesis; N(2)-acetyl-L-ornithine from L-glutamate: step 2/4. Its function is as follows. Catalyzes the ATP-dependent phosphorylation of N-acetyl-L-glutamate. The polypeptide is Acetylglutamate kinase (Alcanivorax borkumensis (strain ATCC 700651 / DSM 11573 / NCIMB 13689 / SK2)).